The following is a 263-amino-acid chain: Isoprenyl transferase (263 aa).

The active site involves D38. A Mg(2+)-binding site is contributed by D38. Substrate is bound by residues 39–42, H55, and 83–85; these read GNRR and STD. N86 (proton acceptor) is an active-site residue. Substrate is bound by residues F87, R89, R212, and 218–220; that span reads RLS. E231 lines the Mg(2+) pocket.

The protein belongs to the UPP synthase family. As to quaternary structure, homodimer. Mg(2+) serves as cofactor.

Functionally, catalyzes the condensation of isopentenyl diphosphate (IPP) with allylic pyrophosphates generating different type of terpenoids. This is Isoprenyl transferase from Thermus thermophilus (strain ATCC BAA-163 / DSM 7039 / HB27).